A 324-amino-acid chain; its full sequence is MLEQGLLVTAGVAFLISVALSPLFIPFLRKLKFGQSIRDEGPKSHQKKSGTPTMGGIVIYVSMMVTSLIMAIKFNHLGAEVSLLLLVTFGYGLIGFLDDYIKVVKKRNLGLTSKQKLVGQLVIAIAFFFIGKGQAFHTYIMIPGTDVKFELGWAYFVLVLFMLIGGSNAVNLTDGLDGLLSGTAAIAFGAFSIIAVAQEQFGVAIFCMAVVGAVLGFLVFNANPAEVFMGDTGSLALGGAIAAVAILLKQELLLVIIGGVFVMETLSVIIQVISFKTTGKRVFKMSPLHHHYELCGWSEWRVVVTFWSVGFLLAVLGIYIGVWM.

The next 10 helical transmembrane spans lie at 5–25, 52–72, 77–97, 122–142, 149–169, 176–196, 201–221, 227–247, 253–273, and 302–322; these read GLLVTAGVAFLISVALSPLFI, PTMGGIVIYVSMMVTSLIMAI, LGAEVSLLLLVTFGYGLIGFL, VIAIAFFFIGKGQAFHTYIMI, FELGWAYFVLVLFMLIGGSNA, LDGLLSGTAAIAFGAFSIIAV, FGVAIFCMAVVGAVLGFLVFN, VFMGDTGSLALGGAIAAVAIL, LLVIIGGVFVMETLSVIIQVI, and VVVTFWSVGFLLAVLGIYIGV.

The protein belongs to the glycosyltransferase 4 family. MraY subfamily. It depends on Mg(2+) as a cofactor.

The protein resides in the cell membrane. The catalysed reaction is UDP-N-acetyl-alpha-D-muramoyl-L-alanyl-gamma-D-glutamyl-meso-2,6-diaminopimeloyl-D-alanyl-D-alanine + di-trans,octa-cis-undecaprenyl phosphate = di-trans,octa-cis-undecaprenyl diphospho-N-acetyl-alpha-D-muramoyl-L-alanyl-D-glutamyl-meso-2,6-diaminopimeloyl-D-alanyl-D-alanine + UMP. It participates in cell wall biogenesis; peptidoglycan biosynthesis. Functionally, catalyzes the initial step of the lipid cycle reactions in the biosynthesis of the cell wall peptidoglycan: transfers peptidoglycan precursor phospho-MurNAc-pentapeptide from UDP-MurNAc-pentapeptide onto the lipid carrier undecaprenyl phosphate, yielding undecaprenyl-pyrophosphoryl-MurNAc-pentapeptide, known as lipid I. In Bacillus anthracis, this protein is Phospho-N-acetylmuramoyl-pentapeptide-transferase.